The chain runs to 912 residues: Protein translocase subunit SecA (912 aa).

ATP-binding positions include Gln-87, 105–109 (GEGKT), and Asp-508. Positions 869 to 912 (EQMQGGNAPVPVSQVTRDEPKVGRNDPCPCGSGKKYKHCHGQLS) are disordered. Zn(2+)-binding residues include Cys-896, Cys-898, Cys-907, and His-908. Over residues 902–912 (KKYKHCHGQLS) the composition is skewed to basic residues.

Belongs to the SecA family. In terms of assembly, monomer and homodimer. Part of the essential Sec protein translocation apparatus which comprises SecA, SecYEG and auxiliary proteins SecDF-YajC and YidC. Requires Zn(2+) as cofactor.

The protein localises to the cell inner membrane. The protein resides in the cytoplasm. The enzyme catalyses ATP + H2O + cellular proteinSide 1 = ADP + phosphate + cellular proteinSide 2.. In terms of biological role, part of the Sec protein translocase complex. Interacts with the SecYEG preprotein conducting channel. Has a central role in coupling the hydrolysis of ATP to the transfer of proteins into and across the cell membrane, serving both as a receptor for the preprotein-SecB complex and as an ATP-driven molecular motor driving the stepwise translocation of polypeptide chains across the membrane. This is Protein translocase subunit SecA from Xanthomonas axonopodis pv. citri (strain 306).